Consider the following 494-residue polypeptide: 4-trimethylaminobutyraldehyde dehydrogenase (494 aa).

Residue S2 is modified to N-acetylserine. K30 carries the N6-acetyllysine; alternate modification. K30 is modified (N6-succinyllysine; alternate). An N6-succinyllysine modification is found at K59. NAD(+) is bound by residues K180 and 232–236; that span reads GSVPT. E254 (proton acceptor) is an active-site residue. C288 acts as the Nucleophile in catalysis. Residue K298 is modified to N6-acetyllysine. K303 carries the N6-acetyllysine; alternate modification. At K303 the chain carries N6-succinyllysine; alternate. K344 is modified (N6-acetyllysine). Residue E391 coordinates NAD(+).

Belongs to the aldehyde dehydrogenase family. As to quaternary structure, homotetramer.

The protein localises to the cytoplasm. It localises to the cytosol. It catalyses the reaction 4-(trimethylamino)butanal + NAD(+) + H2O = 4-(trimethylamino)butanoate + NADH + 2 H(+). The enzyme catalyses an aldehyde + NAD(+) + H2O = a carboxylate + NADH + 2 H(+). The catalysed reaction is 4-aminobutanal + NAD(+) + H2O = 4-aminobutanoate + NADH + 2 H(+). It carries out the reaction formaldehyde + NAD(+) + H2O = formate + NADH + 2 H(+). It catalyses the reaction acetaldehyde + NAD(+) + H2O = acetate + NADH + 2 H(+). The enzyme catalyses imidazole-4-acetaldehyde + NAD(+) + H2O = imidazole-4-acetate + NADH + 2 H(+). The catalysed reaction is acrolein + NAD(+) + H2O = acrylate + NADH + 2 H(+). It carries out the reaction (5-hydroxyindol-3-yl)acetaldehyde + NAD(+) + H2O = (5-hydroxyindol-3-yl)acetate + NADH + 2 H(+). It catalyses the reaction 3,4-dihydroxyphenylacetaldehyde + NAD(+) + H2O = 3,4-dihydroxyphenylacetate + NADH + 2 H(+). The enzyme catalyses spermine monoaldehyde + NAD(+) + H2O = N-(2-carboxyethyl)spermidine + NADH + 2 H(+). The catalysed reaction is propanal + NAD(+) + H2O = propanoate + NADH + 2 H(+). It carries out the reaction butanal + NAD(+) + H2O = butanoate + NADH + 2 H(+). It catalyses the reaction pentanal + NAD(+) + H2O = pentanoate + NADH + 2 H(+). The enzyme catalyses hexanal + NAD(+) + H2O = hexanoate + NADH + 2 H(+). It functions in the pathway amine and polyamine biosynthesis; carnitine biosynthesis. Its function is as follows. Converts gamma-trimethylaminobutyraldehyde into gamma-butyrobetaine with high efficiency (in vitro). Can catalyze the irreversible oxidation of a broad range of aldehydes to the corresponding acids in an NAD-dependent reaction, but with low efficiency. Catalyzes the oxidation of aldehydes arising from biogenic amines and polyamines. This Sus scrofa (Pig) protein is 4-trimethylaminobutyraldehyde dehydrogenase (ALDH9A1).